The following is a 262-amino-acid chain: MSRLQLRFLLRRALSGSGCPRYSMPGSGCPGCFLPRVTCFRDFNIITSTMQYNLDKRNIYTSVGKHYFFDTHAVVQLLEANGFSAEQSEIVVSALVKILNVNMNLIHKDMVTKEQQEISLQQVMSLIASVKKDMIILEKSEFSALRTQNEKVKIELQQLKKQLNDSIVKVRASNKLDFNLEKSRVKEMHADNERKLLELRTSIVELHSQQDRGLTQTKRKIDTEVSGVKTMQESHKLDTIKYLAGSVFTCLTIALGFYRLWI.

Residues 138 to 175 adopt a coiled-coil conformation; it reads EKSEFSALRTQNEKVKIELQQLKKQLNDSIVKVRASNK. The chain crosses the membrane as a helical span at residues 239-261; the sequence is TIKYLAGSVFTCLTIALGFYRLW.

Belongs to the CCDC90 family.

The protein resides in the mitochondrion inner membrane. Key regulator of mitochondrial calcium uniporter (mcu) required for calcium entry into mitochondrion. The protein is Mitochondrial calcium uniporter regulator 1 of Xenopus tropicalis (Western clawed frog).